The following is a 151-amino-acid chain: Probable flavodoxin 2 (151 aa).

In terms of domain architecture, Flavodoxin-like spans 4 to 144 (ILLVYATMSG…ELINFGRQFA (141 aa)). FMN-binding positions include 10 to 14 (TMSGN) and 88 to 119 (VFGSGDTAYEFFCGAVDTLEAKIKERGGDIVL).

The protein belongs to the flavodoxin family. FMN serves as cofactor.

Low-potential electron donor to a number of redox enzymes. This chain is Probable flavodoxin 2 (ykuP), found in Bacillus subtilis (strain 168).